The chain runs to 506 residues: MLRRRKRASPTDLYRSCLQGGDCIPDVQNKFEGNTIADWLLKIFGGLVYFGNLGIGTGRGTGGTFGYRPFGAPGSGRPTQELPIARPNVVIDPLGPAPIVPVDPSAASIVPLVEGAPDVGFAAPDAGPAAGGTDIELYTITNSTTDVGAVGGGPTVTSNEEFEVAVIDAQPIAPYPKQLLYDSTIAATFETQINPFINPDINNVNVLVDPSFAGDTVGDYFYEEIPLERLDIQTFDILEPPTESTPTQLGNRFVSRARDLYSRFVAQQPISEPDFLSQPSRLVQFEYRNPAFDPDVSLYFERDLEGLRAAPLQEFADVVYLGRPRVSSTSEGTIRVSRLGTRAALTTRSGLSVGPQVHFYMDLSDIPPEDSIELHTLNVTPQTSTIVDDILATTTFDDPANSLFTQFNEDVLTDDVEHNFTESHLVIPATDEENDTAINIINLRNIPLTVGMNSGDISTTLSDYNILDASLIVKSNVSEQPLFVLDYSDYDLHPGLLPKRRRIDYF.

Positions 1 to 8 match the Nuclear localization signal motif; the sequence is MLRRRKRA. Cys17 and Cys23 are joined by a disulfide. The Nuclear localization signal signature appears at 498–503; sequence PKRRRI.

Belongs to the papillomaviridae L2 protein family. As to quaternary structure, interacts with major capsid protein L1. Interacts with E2; this interaction inhibits E2 transcriptional activity but not the DNA replication function E2. Interacts with host GADD45GIP1. Interacts with host HSPA8; this interaction is required for L2 nuclear translocation. Interacts with host importins KPNB2 and KPNB3. Forms a complex with importin alpha2-beta1 heterodimers via interaction with the importin alpha2 adapter. Interacts with host DYNLT1; this interaction is essential for virus intracellular transport during entry. Interacts (via C-terminus) with host retromer subunits VPS35 and VPS29. Post-translationally, highly phosphorylated.

Its subcellular location is the virion. It localises to the host nucleus. The protein resides in the host early endosome. It is found in the host Golgi apparatus. Functionally, minor protein of the capsid that localizes along the inner surface of the virion, within the central cavities beneath the L1 pentamers. Plays a role in capsid stabilization through interaction with the major capsid protein L1. Once the virion enters the host cell, L2 escorts the genomic DNA into the nucleus by promoting escape from the endosomal compartments and traffic through the host Golgi network. Mechanistically, the C-terminus of L2 possesses a cell-penetrating peptide that protudes from the host endosome, interacts with host cytoplasmic retromer cargo and thereby mediates the capsid delivery to the host trans-Golgi network. Plays a role through its interaction with host dynein in the intracellular microtubule-dependent transport of viral capsid toward the nucleus. Mediates the viral genome import into the nucleus through binding to host importins. Once within the nucleus, L2 localizes viral genomes to host PML bodies in order to activate early gene expression for establishment of infection. Later on, promotes late gene expression by interacting with the viral E2 protein and by inhibiting its transcriptional activation functions. During virion assembly, encapsidates the genome by direct interaction with the viral DNA. The sequence is that of Minor capsid protein L2 from Homo sapiens (Human).